A 217-amino-acid polypeptide reads, in one-letter code: GrpE protein homolog 1, mitochondrial (217 aa).

The transit peptide at 1 to 27 (MAAQCVRLARRSLPALALSLRPSPRLL) directs the protein to the mitochondrion. The interval 29–56 (TATKQKNSGQNLEEDMGQSEQKADPPAT) is disordered. A compositionally biased stretch (polar residues) spans 30-39 (ATKQKNSGQN). Lysine 94 bears the N6-acetyllysine; alternate mark. The residue at position 94 (lysine 94) is an N6-succinyllysine; alternate. Lysine 100 carries the post-translational modification N6-acetyllysine. Position 120 is an N6-succinyllysine (lysine 120). Lysine 215 carries the post-translational modification N6-acetyllysine; alternate. Lysine 215 is modified (N6-succinyllysine; alternate).

It belongs to the GrpE family. As to quaternary structure, probable component of the PAM complex at least composed of a mitochondrial HSP70 protein, GRPEL1 or GRPEL2, TIMM44, TIMM16/PAM16 and TIMM14/DNAJC19. Binds to HSP70, HSC70 and HSJ1B.

The protein localises to the mitochondrion matrix. Its function is as follows. Essential component of the PAM complex, a complex required for the translocation of transit peptide-containing proteins from the inner membrane into the mitochondrial matrix in an ATP-dependent manner. Seems to control the nucleotide-dependent binding of mitochondrial HSP70 to substrate proteins. In Homo sapiens (Human), this protein is GrpE protein homolog 1, mitochondrial (GRPEL1).